The primary structure comprises 224 residues: Coiled-coil domain-containing protein 43 (224 aa).

A Glycyl lysine isopeptide (Lys-Gly) (interchain with G-Cter in SUMO1) cross-link involves residue lysine 95. Coiled coils occupy residues 121-145 (SEEEKQRKAALLAQYADVTDEEDEA) and 177-218 (RKLE…KRTQ). Positions 138-149 (VTDEEDEADEKD) are enriched in acidic residues. Disordered stretches follow at residues 138 to 157 (VTDEEDEADEKDDSGATTMN) and 176 to 224 (ARKL…ERKR). Phosphothreonine is present on threonine 139. Over residues 176-211 (ARKLERDSLRDESQRKKEQDKLQRERDKLAKQERKE) the composition is skewed to basic and acidic residues. Basic residues predominate over residues 212-224 (KEKKRTQRGERKR).

Belongs to the CCDC43 family.

This chain is Coiled-coil domain-containing protein 43 (CCDC43), found in Homo sapiens (Human).